A 518-amino-acid polypeptide reads, in one-letter code: 12S seed storage globulin 2 (518 aa).

Residues 1-24 (MATTRFPSLLFYSYIFLLCNGSMA) form the signal peptide. 2 disulfide bridges follow: Cys-45–Cys-78 and Cys-121–Cys-324. The Cupin type-1 1 domain maps to 50 to 240 (LQAFEPLRQV…ALGISQQVAQ (191 aa)). The interval 280–311 (IQSQEEQSTQYQVGQSPQYQEGQSTQYQPGQS) is disordered. The Cupin type-1 2 domain occupies 330 to 479 (QNIENPKRAD…AYRISRQEAQ (150 aa)). The interval 482 to 518 (KNNRGEEFDAFTPKFTQTGSQSYQDEGESSSTEKASE) is disordered. Over residues 495–518 (KFTQTGSQSYQDEGESSSTEKASE) the composition is skewed to polar residues.

The protein belongs to the 11S seed storage protein (globulins) family. Hexamer; each subunit is composed of an acidic and a basic chain derived from a single precursor and linked by a disulfide bond.

In terms of biological role, this is a seed storage protein. In Avena sativa (Oat), this protein is 12S seed storage globulin 2.